The primary structure comprises 156 residues: Ribosomal RNA large subunit methyltransferase H (156 aa).

Residues leucine 72 and glycine 104 each contribute to the S-adenosyl-L-methionine site.

This sequence belongs to the RNA methyltransferase RlmH family. Homodimer.

It is found in the cytoplasm. The catalysed reaction is pseudouridine(1915) in 23S rRNA + S-adenosyl-L-methionine = N(3)-methylpseudouridine(1915) in 23S rRNA + S-adenosyl-L-homocysteine + H(+). In terms of biological role, specifically methylates the pseudouridine at position 1915 (m3Psi1915) in 23S rRNA. The polypeptide is Ribosomal RNA large subunit methyltransferase H (Maricaulis maris (strain MCS10) (Caulobacter maris)).